The sequence spans 2008 residues: Histone-lysine N-methyltransferase SETD1B (2008 aa).

Over residues 1 to 20 the composition is skewed to basic and acidic residues; the sequence is MSFREIKAGEKAKHPEDHGK. The tract at residues 1-42 is disordered; the sequence is MSFREIKAGEKAKHPEDHGKKQSSSWINGMENSTQASTSVEK. The segment covering 22-39 has biased composition (polar residues); the sequence is QSSSWINGMENSTQASTS. The RRM domain maps to 111–199; the sequence is DEFYVGPVPP…NIIHVELDTK (89 aa). 9 disordered regions span residues 249 to 390, 402 to 652, 682 to 725, 950 to 1172, 1309 to 1328, 1345 to 1461, 1563 to 1600, 1674 to 1712, and 1814 to 1842; these read NLSS…SSYK, FPQS…APIT, PPGF…PPLP, RKEP…DKRE, TKLP…PGRE, VPSS…FTPT, VGAS…MYSG, KEEE…PQFR, and EEPP…RRSE. The span at 251–264 shows a compositional bias: low complexity; it reads SSVGSSVTPNSSTP. 5 stretches are compositionally biased toward polar residues: residues 265 to 293, 301 to 315, 360 to 381, 405 to 414, and 456 to 491; these read FSHD…QGTP, PFSQ…QTTP, HQFS…TPPL, SEEQPFAQTS, and DSNS…QHNS. Positions 492-521 are enriched in basic and acidic residues; the sequence is LDSRIEMLLKEQRTKLPFLNEHDSDNEVRM. Positions 524–537 are enriched in low complexity; that stretch reads SPISSSSSQLSPIP. Polar residues-rich tracts occupy residues 540-560 and 582-604; these read GSNS…SSTG and ASLN…QLNR. 2 stretches are compositionally biased toward basic and acidic residues: residues 606–617 and 626–636; these read SKVETLEVKEMV and EKMDESQHSSG. Residues 637–646 show a composition bias toward acidic residues; it reads EDMEISDDEM. Basic and acidic residues predominate over residues 979–997; the sequence is ERDRDASDTTSDLSKKDAE. The segment covering 1011–1020 has biased composition (acidic residues); that stretch reads LDSEGEEGDE. Residues 1021-1031 are compositionally biased toward basic and acidic residues; that stretch reads TSGKEEESSSE. 2 stretches are compositionally biased toward acidic residues: residues 1050–1094 and 1105–1149; these read EEEE…EEDA and ESSD…EDQD. Basic and acidic residues predominate over residues 1150-1172; the sequence is REAMVAETEHEPASHELPDDKRE. The segment covering 1345-1356 has biased composition (low complexity); it reads VPSSTVPLPSTP. The segment covering 1378-1392 has biased composition (basic and acidic residues); that stretch reads SIEEEIPRTPGRDIL. Over residues 1418–1427 the composition is skewed to low complexity; sequence LTGSSLTLSS. Basic residues-rich tracts occupy residues 1577–1587 and 1681–1690; these read LPKRRPGRPRR and KPKRQWRRQK. The segment covering 1699–1710 has biased composition (pro residues); the sequence is IPSPEYSPPQPQ. The short motif at 1840–1845 is the RxxxRR motif element; the sequence is RSEQRR. The 118-residue stretch at 1869-1986 folds into the SET domain; the sequence is KKLKFCKSHI…VNEEITYDYK (118 aa). Tyrosine 1985 serves as a coordination point for S-adenosyl-L-methionine. In terms of domain architecture, Post-SET spans 1992–2008; sequence VKIPCLCGSENCRGTLN.

The protein belongs to the class V-like SAM-binding methyltransferase superfamily. In terms of assembly, component of the SET1B/COMPASS complex.

It is found in the nucleus speckle. Its subcellular location is the chromosome. It carries out the reaction L-lysyl(4)-[histone H3] + 3 S-adenosyl-L-methionine = N(6),N(6),N(6)-trimethyl-L-lysyl(4)-[histone H3] + 3 S-adenosyl-L-homocysteine + 3 H(+). Histone methyltransferase that specifically methylates 'Lys-4' of histone H3, when part of the SET1 histone methyltransferase (HMT) complex, but not if the neighboring 'Lys-9' residue is already methylated. H3 'Lys-4' methylation represents a specific tag for epigenetic transcriptional activation. This Gallus gallus (Chicken) protein is Histone-lysine N-methyltransferase SETD1B (SETD1B).